Here is a 247-residue protein sequence, read N- to C-terminus: NAD(P)H-quinone oxidoreductase subunit K, chloroplastic (247 aa).

Residues Cys-61, Cys-62, Cys-126, and Cys-157 each coordinate [4Fe-4S] cluster.

This sequence belongs to the complex I 20 kDa subunit family. NDH is composed of at least 16 different subunits, 5 of which are encoded in the nucleus. The cofactor is [4Fe-4S] cluster.

The protein localises to the plastid. The protein resides in the chloroplast thylakoid membrane. The enzyme catalyses a plastoquinone + NADH + (n+1) H(+)(in) = a plastoquinol + NAD(+) + n H(+)(out). It catalyses the reaction a plastoquinone + NADPH + (n+1) H(+)(in) = a plastoquinol + NADP(+) + n H(+)(out). Functionally, NDH shuttles electrons from NAD(P)H:plastoquinone, via FMN and iron-sulfur (Fe-S) centers, to quinones in the photosynthetic chain and possibly in a chloroplast respiratory chain. The immediate electron acceptor for the enzyme in this species is believed to be plastoquinone. Couples the redox reaction to proton translocation, and thus conserves the redox energy in a proton gradient. In Anthoceros angustus (Hornwort), this protein is NAD(P)H-quinone oxidoreductase subunit K, chloroplastic.